A 270-amino-acid chain; its full sequence is Bis(5'-nucleosyl)-tetraphosphatase, symmetrical (270 aa).

The protein belongs to the Ap4A hydrolase family.

It carries out the reaction P(1),P(4)-bis(5'-adenosyl) tetraphosphate + H2O = 2 ADP + 2 H(+). Hydrolyzes diadenosine 5',5'''-P1,P4-tetraphosphate to yield ADP. The polypeptide is Bis(5'-nucleosyl)-tetraphosphatase, symmetrical (Actinobacillus pleuropneumoniae serotype 3 (strain JL03)).